Reading from the N-terminus, the 230-residue chain is Sodium channel modifier 1 (230 aa).

Phosphoserine is present on Ser-2. The Bipartite nuclear localization signal motif lies at Lys-4–Arg-20. Residues Phe-42–Leu-74 form a Matrin-type zinc finger. A Glycyl lysine isopeptide (Lys-Gly) (interchain with G-Cter in SUMO2) cross-link involves residue Lys-67. 3 disordered regions span residues Tyr-76–Leu-106, Arg-129–Arg-186, and Gly-200–Asp-230. Residues Pro-81–Ala-102 show a composition bias toward basic and acidic residues. Ser-144 carries the phosphoserine modification. The segment covering Pro-164–Ala-174 has biased composition (low complexity). At Ser-183 the chain carries Phosphoserine. Residues Arg-188–Asp-230 form a required for interaction with LUC7L2 region. A compositionally biased stretch (basic and acidic residues) spans Gly-205 to Asn-214. The span at Val-215 to Asp-230 shows a compositional bias: acidic residues. Ser-219 bears the Phosphoserine mark.

Component of the minor spliceosome, which splices U12-type introns. Within this complex, interacts with RNF113A, as well as with SF3B1/SF3b155, SF3B2/SF3b145, SF3B3/SF3b130 and CDC5L. May interact with LUC7L2 and SNRNP70.

It is found in the nucleus. Its subcellular location is the nucleoplasm. The protein resides in the nucleus speckle. Functionally, as a component of the minor spliceosome, involved in the splicing of U12-type introns in pre-mRNAs. Plays a role in the regulation of primary cilia length and Hedgehog signaling. This is Sodium channel modifier 1 (SCNM1) from Homo sapiens (Human).